Reading from the N-terminus, the 284-residue chain is 16S rRNA (guanine(1405)-N(7))-methyltransferase (284 aa).

Residues Tyr73, 111–113 (HAS), Arg117, Ala142, Asp165, 191–192 (DL), Leu208, and Gln217 each bind S-adenosyl-L-methionine.

It belongs to the methyltransferase superfamily. Aminoglycoside resistance family.

The catalysed reaction is guanosine(1405) in 16S rRNA + S-adenosyl-L-methionine = N(7)-methylguanosine(1405) in 16S rRNA + S-adenosyl-L-homocysteine. In terms of biological role, specifically methylates the N(7) position of guanine 1405 in 16S rRNA. Confers resistance to various aminoglycosides, including gentamicin and kanamycin. This Frankia casuarinae (strain DSM 45818 / CECT 9043 / HFP020203 / CcI3) protein is 16S rRNA (guanine(1405)-N(7))-methyltransferase (Krm).